The sequence spans 343 residues: Lactamase-like protein nscB (343 aa).

Histidine 118, histidine 120, aspartate 122, and histidine 123 together coordinate Zn(2+). The active-site Proton donor/acceptor is aspartate 122.

Belongs to the metallo-beta-lactamase superfamily. The cofactor is Zn(2+).

It functions in the pathway secondary metabolite biosynthesis. Its function is as follows. Lactamase-like protein; part of the gene cluster that mediates the biosynthesis of neosartoricin B, a prenylated anthracenone that probably exhibits T-cell antiproliferative activity, suggestive of a physiological role as an immunosuppressive agent. The non-reducing polyketide synthase nscA probably synthesizes and cyclizes the decaketide backbone. The hydrolase nscB then mediates the product release through hydrolysis followed by spontaneous decarboxylation. The prenyltransferase nscD catalyzes the addition of the dimethylallyl group to the aromatic C5. The FAD-dependent monooxygenase nscC is then responsible for the stereospecific hydroxylation at C2. Neosartoricin B can be converted into two additional compounds neosartoricins C and D. Neosartoricin C is a spirocyclic compound that is cyclized through the attack of C3 hydroxyl on C14, followed by dehydration. On the other hand, neosartoricin D is a further cyclized compound in which attack of C2 on C14 in neosartoricin C results in the formation of the acetal-containing dioxabicyclo-octanone ring. Both of these compounds are novel and possibly represent related metabolites of the gene cluster. This chain is Lactamase-like protein nscB, found in Arthroderma otae (strain ATCC MYA-4605 / CBS 113480) (Microsporum canis).